Reading from the N-terminus, the 375-residue chain is D-alanine--D-alanine ligase (375 aa).

The ATP-grasp domain occupies 145 to 348; that stretch reads KRLLRDADLE…YPALITRLIE (204 aa). Position 175–230 (175–230) interacts with ATP; sequence ITYLGSSLFVKPANQGSSVGVSKVINRISFDQALALAFCFDDKVLVESAINGRELE. Residues aspartate 302, glutamate 315, and asparagine 317 each coordinate Mg(2+).

The protein belongs to the D-alanine--D-alanine ligase family. Mg(2+) serves as cofactor. Requires Mn(2+) as cofactor.

The protein localises to the cytoplasm. The catalysed reaction is 2 D-alanine + ATP = D-alanyl-D-alanine + ADP + phosphate + H(+). Its pathway is cell wall biogenesis; peptidoglycan biosynthesis. Cell wall formation. This Baumannia cicadellinicola subsp. Homalodisca coagulata protein is D-alanine--D-alanine ligase.